A 123-amino-acid chain; its full sequence is Small ribosomal subunit protein uS12 (123 aa).

Asp89 is modified (3-methylthioaspartic acid). The tract at residues Thr101–Lys123 is disordered. Residues Ser113–Lys123 show a composition bias toward basic residues.

The protein belongs to the universal ribosomal protein uS12 family. As to quaternary structure, part of the 30S ribosomal subunit. Contacts proteins S8 and S17. May interact with IF1 in the 30S initiation complex.

Functionally, with S4 and S5 plays an important role in translational accuracy. Interacts with and stabilizes bases of the 16S rRNA that are involved in tRNA selection in the A site and with the mRNA backbone. Located at the interface of the 30S and 50S subunits, it traverses the body of the 30S subunit contacting proteins on the other side and probably holding the rRNA structure together. The combined cluster of proteins S8, S12 and S17 appears to hold together the shoulder and platform of the 30S subunit. This chain is Small ribosomal subunit protein uS12, found in Solidesulfovibrio magneticus (strain ATCC 700980 / DSM 13731 / RS-1) (Desulfovibrio magneticus).